The chain runs to 366 residues: Anhydro-N-acetylmuramic acid kinase (366 aa).

Gly-12–Asp-19 is a binding site for ATP.

It belongs to the anhydro-N-acetylmuramic acid kinase family.

The catalysed reaction is 1,6-anhydro-N-acetyl-beta-muramate + ATP + H2O = N-acetyl-D-muramate 6-phosphate + ADP + H(+). It participates in amino-sugar metabolism; 1,6-anhydro-N-acetylmuramate degradation. Its pathway is cell wall biogenesis; peptidoglycan recycling. Its function is as follows. Catalyzes the specific phosphorylation of 1,6-anhydro-N-acetylmuramic acid (anhMurNAc) with the simultaneous cleavage of the 1,6-anhydro ring, generating MurNAc-6-P. Is required for the utilization of anhMurNAc either imported from the medium or derived from its own cell wall murein, and thus plays a role in cell wall recycling. The polypeptide is Anhydro-N-acetylmuramic acid kinase (Nitrosospira multiformis (strain ATCC 25196 / NCIMB 11849 / C 71)).